The following is a 109-amino-acid chain: Cell division protein ZapA (109 aa).

Positions 71–99 (KTRDYASNMEQRIRMLQQTIEQALLEQGR) form a coiled coil.

Belongs to the ZapA family. Type 1 subfamily. In terms of assembly, homodimer. Interacts with FtsZ.

Its subcellular location is the cytoplasm. Its function is as follows. Activator of cell division through the inhibition of FtsZ GTPase activity, therefore promoting FtsZ assembly into bundles of protofilaments necessary for the formation of the division Z ring. It is recruited early at mid-cell but it is not essential for cell division. This is Cell division protein ZapA from Serratia proteamaculans (strain 568).